We begin with the raw amino-acid sequence, 239 residues long: Lipoprotein-releasing system ATP-binding protein LolD (239 aa).

Residues 10–239 form the ABC transporter domain; the sequence is VELSGVRKDY…ADGPHRRSGA (230 aa). Position 46–53 (46–53) interacts with ATP; it reads GPSGSGKS.

This sequence belongs to the ABC transporter superfamily. Lipoprotein translocase (TC 3.A.1.125) family. In terms of assembly, the complex is composed of two ATP-binding proteins (LolD) and two transmembrane proteins (LolC and LolE).

The protein resides in the cell inner membrane. Its function is as follows. Part of the ABC transporter complex LolCDE involved in the translocation of mature outer membrane-directed lipoproteins, from the inner membrane to the periplasmic chaperone, LolA. Responsible for the formation of the LolA-lipoprotein complex in an ATP-dependent manner. The chain is Lipoprotein-releasing system ATP-binding protein LolD from Anaeromyxobacter dehalogenans (strain 2CP-C).